A 264-amino-acid polypeptide reads, in one-letter code: Apolipoprotein A-I (264 aa).

The N-terminal stretch at 1-18 is a signal peptide; it reads MKAVVLAVAVLFLTGSQA. A run of 2 repeats spans residues 67–88 and 89–110. A 10 X approximate tandem repeats region spans residues 67-264; the sequence is LKLVDNWDTV…DETSKRLSTQ (198 aa). At Met109 the chain carries Methionine sulfoxide. A 3; half-length repeat occupies 111–121; that stretch reads KDLEEVKKQVQ. 3 consecutive repeat copies span residues 122 to 143, 144 to 165, and 166 to 187. One copy of the 7; truncated repeat lies at 188–207; the sequence is PYSDKMRERLAQHLAKLKDS. Met193 carries the post-translational modification Methionine sulfoxide. Repeat 8 spans residues 208 to 229; sequence TTLAEYRTKASNHLQTLSEKAK. The stretch at 230–240 is one 9; half-length repeat; sequence PALEDLRQGLT. Copy 10 of the repeat occupies 241–264; sequence PMLESFRATIMGWIDETSKRLSTQ. At Met242 the chain carries Methionine sulfoxide.

It belongs to the apolipoprotein A1/A4/E family. In terms of assembly, homodimer. Interacts with APOA1BP and CLU. Component of a sperm activating protein complex (SPAP), consisting of APOA1, an immunoglobulin heavy chain, an immunoglobulin light chain and albumin. Interacts with NDRG1. Interacts with SCGB3A2. Interacts with NAXE and YJEFN3. Post-translationally, glycosylated. In terms of processing, palmitoylated. Phosphorylation sites are present in the extracellular medium.

Its subcellular location is the secreted. Participates in the reverse transport of cholesterol from tissues to the liver for excretion by promoting cholesterol efflux from tissues and by acting as a cofactor for the lecithin cholesterol acyltransferase (LCAT). As part of the SPAP complex, activates spermatozoa motility. The protein is Apolipoprotein A-I (Apoa1) of Peromyscus maniculatus bairdii (Prairie deer mouse).